We begin with the raw amino-acid sequence, 949 residues long: Translation initiation factor IF-2 (949 aa).

Disordered stretches follow at residues 46–82 (LTAS…EAEA), 145–176 (EPAV…ERAS), and 188–361 (IPIT…KTEL). Residues 152-162 (ASPAVTAAKPV) are compositionally biased toward low complexity. Positions 163-172 (PATPAAPPQP) are enriched in pro residues. A compositionally biased stretch (low complexity) spans 263–276 (PRDAAAPRPAGARP). Residues 334–344 (SREERQFDPFH) are compositionally biased toward basic and acidic residues. Residues 449-618 (ERPPVVTIMG…LLQADLMDLK (170 aa)) form the tr-type G domain. Positions 458–465 (GHVDHGKT) are G1. 458–465 (GHVDHGKT) is a GTP binding site. Positions 483-487 (GITQH) are G2. Residues 504-507 (DTPG) are G3. GTP-binding positions include 504–508 (DTPGH) and 558–561 (NKID). The G4 stretch occupies residues 558–561 (NKID). Positions 594–596 (SAK) are G5.

Belongs to the TRAFAC class translation factor GTPase superfamily. Classic translation factor GTPase family. IF-2 subfamily.

It is found in the cytoplasm. In terms of biological role, one of the essential components for the initiation of protein synthesis. Protects formylmethionyl-tRNA from spontaneous hydrolysis and promotes its binding to the 30S ribosomal subunits. Also involved in the hydrolysis of GTP during the formation of the 70S ribosomal complex. This chain is Translation initiation factor IF-2, found in Trichlorobacter lovleyi (strain ATCC BAA-1151 / DSM 17278 / SZ) (Geobacter lovleyi).